Here is a 451-residue protein sequence, read N- to C-terminus: MKQTAFYQQRRVLVIGLAKSGFAAAKLLHELGAIITVNDQKPFEENKEAQQLEQLGIRVICGGHPLELLDEPFDLVVKNPGIPYTNPMVKKAMEKGLPVVTEVELAYHISEAPFIGITGSNGKTTTTTLIYEMLREGEKRPLLAGNIGTAACEVAKKAEASNWLVTELSSFQLAGIRDFRPRISVLLNIFDAHLDYHGTKEAYAQAKANIFKNQTNEDYAVINADDELVMQLAENIHAQKVAFSATKVLGRGAYINNGFIYWNDEAVIAVADIVLPGKHNLENILAAVAVAKLAGVDNKSIYQVLTTFTGVKHRLQYVATIDGRKFFNDSKATNILATQKALSAFEKDSVILLAGGLDRGNEFDALLPYLHNVKAVVLFGQTAPKIARVAKQAGIETIEYVDNVEKAVPVAYQLSEPGDVILLSPACASWDQYKTFEQRGDIFIGAVHKLK.

119–125 (GSNGKTT) provides a ligand contact to ATP.

It belongs to the MurCDEF family.

Its subcellular location is the cytoplasm. The catalysed reaction is UDP-N-acetyl-alpha-D-muramoyl-L-alanine + D-glutamate + ATP = UDP-N-acetyl-alpha-D-muramoyl-L-alanyl-D-glutamate + ADP + phosphate + H(+). It functions in the pathway cell wall biogenesis; peptidoglycan biosynthesis. Its function is as follows. Cell wall formation. Catalyzes the addition of glutamate to the nucleotide precursor UDP-N-acetylmuramoyl-L-alanine (UMA). This chain is UDP-N-acetylmuramoylalanine--D-glutamate ligase, found in Geobacillus sp. (strain WCH70).